A 307-amino-acid polypeptide reads, in one-letter code: Agmatinase (307 aa).

Mn(2+) contacts are provided by His128, Asp151, His153, Asp155, Asp232, and Asp234.

Belongs to the arginase family. Agmatinase subfamily. Mn(2+) serves as cofactor.

The catalysed reaction is agmatine + H2O = urea + putrescine. It participates in amine and polyamine biosynthesis; putrescine biosynthesis via agmatine pathway; putrescine from agmatine: step 1/1. Its function is as follows. Catalyzes the formation of putrescine from agmatine. This is Agmatinase from Neisseria meningitidis serogroup A / serotype 4A (strain DSM 15465 / Z2491).